A 185-amino-acid polypeptide reads, in one-letter code: Probable chorismate pyruvate-lyase 2 (185 aa).

3 residues coordinate substrate: arginine 80, leucine 118, and glutamate 170.

It belongs to the UbiC family.

The protein localises to the cytoplasm. The enzyme catalyses chorismate = 4-hydroxybenzoate + pyruvate. The protein operates within cofactor biosynthesis; ubiquinone biosynthesis. In terms of biological role, removes the pyruvyl group from chorismate, with concomitant aromatization of the ring, to provide 4-hydroxybenzoate (4HB) for the ubiquinone pathway. This Pseudomonas entomophila (strain L48) protein is Probable chorismate pyruvate-lyase 2.